A 224-amino-acid chain; its full sequence is Cerebellin-2 (224 aa).

A signal peptide spans 1–51 (MQAPGRGPLGLRLMMPGRRGALREPGGCGSCLGVALALLLLLLPACCPVRA). N-linked (GlcNAc...) asparagine glycans are attached at residues Asn53 and Asn110. Residues 88–224 (SGSAKVAFSA…TFSGFLVFPL (137 aa)) form the C1q domain.

Homohexamer; disulfide-linked homotrimers. The trimers are assembled via the globular C1q domains. The trimers associate via N-terminal cysteine residues to form disulfide-linked hexamers. May form homooligomers or heterooligomers with CBLN1 and CBLN3 prior to secretion. Once secreted, does not interact with other CBLN family members. Interacts with GRID2, and more weakly with GRID1. Interacts with NRXN1 and NRXN2 long and short isoforms produced by alternative promoter usage. Weakly interacts with NRXN3 short isoform and not at all with NRXN3 long isoform.

The protein resides in the secreted. Functionally, acts as a synaptic organizer in specific subsets of neurons in the brain. Essential for long-term maintenance but not establishment of excitatory synapses. Functions as part of a trans-synaptic complex by binding to postsynaptic GRID1 and presynaptic neurexins. This interaction helps regulate the activity of NMDA and AMPA receptors at hippocampal synapses without affecting synapse formation. NRXN1B-CBLN2-GRID1 complex transduce presynaptic signals into postsynaptic NMDAR response. NRXN3B-CBLN2-GRID1 complex transduce presynaptic signals into postsynaptic AMPAR response. This Homo sapiens (Human) protein is Cerebellin-2.